Consider the following 1192-residue polypeptide: MLKALELAGFKSFADRTRFDFPDGITVVVGPNGSGKSNIVDAMKWVLGSQSAKSLRGKDMSDVIFKGSQTRGPAGAAEATIIFDNTGGQMPVDAPEVHVTRRVYRSGEGEYLINQQAVRLKDVKALIRGTGIGIDAYSLIEQGKVDRMLQANAKDRRAIFEEAAGISRFKAKKVEAERRLERVQTNLTRLGDIVDEVATRLKTLKSQAGKAERYRQASDRLKELRTVVAWNDWLTLSTELNEATTQLEAAQRQHRKADTLRESLEEQRQAAEMQLQTIADAAREAEQSRSELSGEIARIGGRRESDQTTLVEQRRTLIGHYRRLRAMRTEAGSAIADLRKTIAALEVAEAELADVQQKKESIAAKRDVEQATVHRIESARDDLQRDHLAAVRRVAEHEANRGRVAQQMREAARALEEIARNSVTAEEGLKTALRDHDEVARNVSELEKRITDAQREVEIADAKVCETRRVLERRREEIGSLKIRLQGITERARVLDELQQKQEGVSGGVREVLRMSNAELKKDLVGIVADCFSVDRQVAPLIDAALGPRSQYVIVRGGSVSDAISRGDIKIGTRVGIIRLDELPNRRPGDKIRLDGLAGVIGRADKMIDCEVELEPLVRHLLGNTWLVDTLATAIGLRKLSSAGLRFVTASGDLLDNDGSSVVGPPGGETGLVSRRSELAAAKSEMQHYSYQIAEAEKEVGRLTGVVDSEAAELGRHEQAMRKWITEHAAAEAKLHHVTERLSARQATVDELKRSSASHTELLATAKQQDGELAVSIQKGKQEIETLEAQRTEVDVQLTAASEQLREVQSEAMSISVEAARSEQRVESLTIAADVARRDQSQREAANQEVRDAMTRTRERITEIETRILEADNRLAELMIAMESADAKLQVLAAEANQEREATRRVQTESQAAIKAVAKATEAVATISSARDAAALKQSTLADRIAEDYQIDLRNDEPPEELAEIEDRSSVDEEISRLRGQVQNVGSVNMEALEELNELQVRYDELHGQYQDLTAAKDSLQRVIARINADSRRLFLDTLEAIRINFQKLYRKSFGGGHADLILEESDDPLEAGVEIVATPPGKPSFSNSLLSGGEKALTAVALLMSIFQYRPSPFCVLDEVDAPFDEANIGRFVTVLTEFLDQSKFIVVTHSKKTMTAATTLYGVTMQESGVSKQVSIRFEDVSEDGQINAA.

Proline 31–asparagine 38 is an ATP binding site. Coiled coils occupy residues alanine 164–valine 197, leucine 234–leucine 292, serine 333–glutamate 369, and glutamate 396–valine 464. The SMC hinge domain maps to lysine 522–glycine 636. Coiled coils occupy residues arginine 676–histidine 736, glutamate 772–alanine 902, and glycine 986–aspartate 1030.

The protein belongs to the SMC family. In terms of assembly, homodimer.

Its subcellular location is the cytoplasm. Its function is as follows. Required for chromosome condensation and partitioning. The chain is Chromosome partition protein Smc from Rhodopirellula baltica (strain DSM 10527 / NCIMB 13988 / SH1).